A 262-amino-acid chain; its full sequence is Indole-3-glycerol phosphate synthase (262 aa).

This sequence belongs to the TrpC family.

The enzyme catalyses 1-(2-carboxyphenylamino)-1-deoxy-D-ribulose 5-phosphate + H(+) = (1S,2R)-1-C-(indol-3-yl)glycerol 3-phosphate + CO2 + H2O. The protein operates within amino-acid biosynthesis; L-tryptophan biosynthesis; L-tryptophan from chorismate: step 4/5. The protein is Indole-3-glycerol phosphate synthase of Chlorobium luteolum (strain DSM 273 / BCRC 81028 / 2530) (Pelodictyon luteolum).